The chain runs to 347 residues: NADH-ubiquinone oxidoreductase chain 2 (347 aa).

A run of 11 helical transmembrane segments spans residues 3 to 23, 25 to 45, 59 to 79, 96 to 116, 122 to 142, 148 to 168, 178 to 198, 202 to 222, 240 to 260, 276 to 296, and 326 to 346; these read PLIL…VMMS, HWLM…PLLM, YFLT…INLM, IIMT…FWVP, ISLT…LSIL, VINP…GGWG, ILAY…AFNP, LLNL…FMVA, ITTS…LAGF, IILA…YIRL, and LPPL…MILL.

Belongs to the complex I subunit 2 family. As to quaternary structure, core subunit of respiratory chain NADH dehydrogenase (Complex I) which is composed of 45 different subunits. Interacts with TMEM242.

It localises to the mitochondrion inner membrane. The catalysed reaction is a ubiquinone + NADH + 5 H(+)(in) = a ubiquinol + NAD(+) + 4 H(+)(out). Its function is as follows. Core subunit of the mitochondrial membrane respiratory chain NADH dehydrogenase (Complex I) which catalyzes electron transfer from NADH through the respiratory chain, using ubiquinone as an electron acceptor. Essential for the catalytic activity and assembly of complex I. The protein is NADH-ubiquinone oxidoreductase chain 2 of Peropteryx kappleri (Greater dog-like bat).